A 301-amino-acid polypeptide reads, in one-letter code: Lipoyl synthase (301 aa).

Cys-50, Cys-55, Cys-61, Cys-76, Cys-80, Cys-83, and Ser-289 together coordinate [4Fe-4S] cluster. Positions 62 to 278 (WNHRTATFLL…RRYALERGFR (217 aa)) constitute a Radical SAM core domain.

This sequence belongs to the radical SAM superfamily. Lipoyl synthase family. The cofactor is [4Fe-4S] cluster.

Its subcellular location is the cytoplasm. The enzyme catalyses [[Fe-S] cluster scaffold protein carrying a second [4Fe-4S](2+) cluster] + N(6)-octanoyl-L-lysyl-[protein] + 2 oxidized [2Fe-2S]-[ferredoxin] + 2 S-adenosyl-L-methionine + 4 H(+) = [[Fe-S] cluster scaffold protein] + N(6)-[(R)-dihydrolipoyl]-L-lysyl-[protein] + 4 Fe(3+) + 2 hydrogen sulfide + 2 5'-deoxyadenosine + 2 L-methionine + 2 reduced [2Fe-2S]-[ferredoxin]. It functions in the pathway protein modification; protein lipoylation via endogenous pathway; protein N(6)-(lipoyl)lysine from octanoyl-[acyl-carrier-protein]: step 2/2. Its function is as follows. Catalyzes the radical-mediated insertion of two sulfur atoms into the C-6 and C-8 positions of the octanoyl moiety bound to the lipoyl domains of lipoate-dependent enzymes, thereby converting the octanoylated domains into lipoylated derivatives. This chain is Lipoyl synthase, found in Roseiflexus sp. (strain RS-1).